The sequence spans 660 residues: Bifunctional polymyxin resistance protein ArnA (660 aa).

The formyltransferase ArnAFT stretch occupies residues 1 to 304 (MKAVIFAYHD…TLGLVAGARL (304 aa)). The active-site Proton donor; for formyltransferase activity is His-104. Residues Arg-114 and 136–140 (VKRAD) each bind (6R)-10-formyltetrahydrofolate. A dehydrogenase ArnADH region spans residues 314–660 (RRIRVLILGV…RSVDVAERAS (347 aa)). NAD(+) contacts are provided by residues Asp-347 and 368-369 (DI). Residues Ala-393, Tyr-398, and 432–433 (TS) each bind UDP-alpha-D-glucuronate. Glu-434 functions as the Proton acceptor; for decarboxylase activity in the catalytic mechanism. Residues Arg-460, Asn-492, 526–535 (KLIDGGQQKR), and Tyr-613 contribute to the UDP-alpha-D-glucuronate site. Arg-619 serves as the catalytic Proton donor; for decarboxylase activity.

The protein in the N-terminal section; belongs to the Fmt family. UDP-L-Ara4N formyltransferase subfamily. In the C-terminal section; belongs to the NAD(P)-dependent epimerase/dehydratase family. UDP-glucuronic acid decarboxylase subfamily. Homohexamer, formed by a dimer of trimers.

It carries out the reaction UDP-alpha-D-glucuronate + NAD(+) = UDP-beta-L-threo-pentopyranos-4-ulose + CO2 + NADH. The enzyme catalyses UDP-4-amino-4-deoxy-beta-L-arabinose + (6R)-10-formyltetrahydrofolate = UDP-4-deoxy-4-formamido-beta-L-arabinose + (6S)-5,6,7,8-tetrahydrofolate + H(+). It functions in the pathway nucleotide-sugar biosynthesis; UDP-4-deoxy-4-formamido-beta-L-arabinose biosynthesis; UDP-4-deoxy-4-formamido-beta-L-arabinose from UDP-alpha-D-glucuronate: step 1/3. It participates in nucleotide-sugar biosynthesis; UDP-4-deoxy-4-formamido-beta-L-arabinose biosynthesis; UDP-4-deoxy-4-formamido-beta-L-arabinose from UDP-alpha-D-glucuronate: step 3/3. Its pathway is bacterial outer membrane biogenesis; lipopolysaccharide biosynthesis. Bifunctional enzyme that catalyzes the oxidative decarboxylation of UDP-glucuronic acid (UDP-GlcUA) to UDP-4-keto-arabinose (UDP-Ara4O) and the addition of a formyl group to UDP-4-amino-4-deoxy-L-arabinose (UDP-L-Ara4N) to form UDP-L-4-formamido-arabinose (UDP-L-Ara4FN). The modified arabinose is attached to lipid A and is required for resistance to polymyxin and cationic antimicrobial peptides. This is Bifunctional polymyxin resistance protein ArnA from Salmonella dublin (strain CT_02021853).